Consider the following 330-residue polypeptide: Phosphate acyltransferase (330 aa).

This sequence belongs to the PlsX family. In terms of assembly, homodimer. Probably interacts with PlsY.

Its subcellular location is the cytoplasm. It carries out the reaction a fatty acyl-[ACP] + phosphate = an acyl phosphate + holo-[ACP]. It functions in the pathway lipid metabolism; phospholipid metabolism. Its function is as follows. Catalyzes the reversible formation of acyl-phosphate (acyl-PO(4)) from acyl-[acyl-carrier-protein] (acyl-ACP). This enzyme utilizes acyl-ACP as fatty acyl donor, but not acyl-CoA. This is Phosphate acyltransferase from Bacillus cytotoxicus (strain DSM 22905 / CIP 110041 / 391-98 / NVH 391-98).